We begin with the raw amino-acid sequence, 188 residues long: MATYSSNDFRPGLKIMFEGEPYAIESSEFVKPGKGQAFARVKMRRLLTGSRVEKTFKSTDSCEGADVVDTNMNYLYNDGEFYHFMHPETFEQHGVEEKTVSDAAKWLQDNAECIVTLWDGRPIAVQPPNFIEAEITDTDPGLKGDTAGTGGKPATLSTGAVVKVPLFVQIGEVVRVDTRSGEYVSRVK.

The residue at position 34 (K34) is an N6-(3,6-diaminohexanoyl)-5-hydroxylysine.

This sequence belongs to the elongation factor P family. Post-translationally, may be beta-lysylated on the epsilon-amino group of Lys-34 by the combined action of EpmA and EpmB, and then hydroxylated on the C5 position of the same residue by EpmC (if this protein is present). Lysylation is critical for the stimulatory effect of EF-P on peptide-bond formation. The lysylation moiety may extend toward the peptidyltransferase center and stabilize the terminal 3-CCA end of the tRNA. Hydroxylation of the C5 position on Lys-34 may allow additional potential stabilizing hydrogen-bond interactions with the P-tRNA.

The protein resides in the cytoplasm. It participates in protein biosynthesis; polypeptide chain elongation. Functionally, involved in peptide bond synthesis. Alleviates ribosome stalling that occurs when 3 or more consecutive Pro residues or the sequence PPG is present in a protein, possibly by augmenting the peptidyl transferase activity of the ribosome. Modification of Lys-34 is required for alleviation. The polypeptide is Elongation factor P (Serratia proteamaculans (strain 568)).